Reading from the N-terminus, the 780-residue chain is Acetyl-CoA decarbonylase/synthase complex subunit alpha (780 aa).

The [4Fe-4S] cluster site is built by cysteine 73, cysteine 76, cysteine 77, cysteine 79, cysteine 84, and cysteine 93. Histidine 116 contributes to the CO binding site. Residues histidine 250, cysteine 278, and cysteine 317 each coordinate [Ni-4Fe-4S] cluster. 2 consecutive 4Fe-4S ferredoxin-type domains span residues 399 to 429 (IDEIIELASECTDCGWCQRVCPNSLPVMDAV) and 440 to 469 (LEEMAIEELCYTCGRCEQECERNIPIVSMV). [4Fe-4S] cluster is bound by residues cysteine 409, cysteine 412, cysteine 415, cysteine 419, cysteine 449, cysteine 452, cysteine 455, and cysteine 459. Positions 517, 546, and 581 each coordinate [Ni-4Fe-4S] cluster.

It belongs to the Ni-containing carbon monoxide dehydrogenase family. In terms of assembly, heterotetramer of two alpha and two epsilon subunits. The ACDS complex is made up of alpha, epsilon, beta, gamma and delta subunits with a probable stoichiometry of (alpha(2)epsilon(2))(4)-beta(8)-(gamma(1)delta(1))(8). The cofactor is [4Fe-4S] cluster. [Ni-4Fe-4S] cluster is required as a cofactor.

It carries out the reaction CO + 2 oxidized [2Fe-2S]-[ferredoxin] + H2O = 2 reduced [2Fe-2S]-[ferredoxin] + CO2 + 2 H(+). In terms of biological role, part of the ACDS complex that catalyzes the reversible cleavage of acetyl-CoA, allowing autotrophic growth from CO(2). The alpha-epsilon subcomponent functions as a carbon monoxide dehydrogenase. This chain is Acetyl-CoA decarbonylase/synthase complex subunit alpha, found in Methanothermobacter thermautotrophicus (strain ATCC 29096 / DSM 1053 / JCM 10044 / NBRC 100330 / Delta H) (Methanobacterium thermoautotrophicum).